The chain runs to 440 residues: Stromal membrane-associated protein 1 (440 aa).

The Arf-GAP domain occupies 18 to 143 (QLILSKLLRE…IAITNKEKEK (126 aa)). The C4-type zinc finger occupies 33 to 56 (CADCEAKGPRWASWNIGVFICIRC). Basic and acidic residues-rich tracts occupy residues 140 to 158 (EKEK…EKPA) and 165 to 178 (KLPK…EPKK). Disordered regions lie at residues 140–211 (EKEK…PATA) and 410–440 (NASA…QLWK). An Interaction with clathrin heavy chains motif is present at residues 192–196 (LLGLD). The segment covering 420-440 (STTAGWSGSSSGQTLSTQLWK) has biased composition (low complexity).

In terms of assembly, interacts with ARF6. Interacts with clathrin heavy chains via the clathrin box-like motif. As to expression, detected in adult brain, lung, heart, liver, ovary and bone marrow. Detected in stromal cells of the red pulp of adult spleen.

It localises to the cell membrane. In terms of biological role, GTPase activating protein that acts on ARF6. Plays a role in clathrin-dependent endocytosis. May play a role in erythropoiesis. The sequence is that of Stromal membrane-associated protein 1 (Smap1) from Mus musculus (Mouse).